A 108-amino-acid polypeptide reads, in one-letter code: Small ribosomal subunit protein uS17 (108 aa).

Belongs to the universal ribosomal protein uS17 family. As to quaternary structure, part of the 30S ribosomal subunit.

Functionally, one of the primary rRNA binding proteins, it binds specifically to the 5'-end of 16S ribosomal RNA. The sequence is that of Small ribosomal subunit protein uS17 from Methanospirillum hungatei JF-1 (strain ATCC 27890 / DSM 864 / NBRC 100397 / JF-1).